The sequence spans 81 residues: Photosystem I iron-sulfur center (81 aa).

2 4Fe-4S ferredoxin-type domains span residues 2-31 and 39-68; these read SHSVKIYDTCIGCTQCVRACPTDVLEMVPW and IASAPRTEDCVGCKRCESACPTDFLSVRVY. Positions 11, 14, 17, 21, 48, 51, 54, and 58 each coordinate [4Fe-4S] cluster.

As to quaternary structure, the eukaryotic PSI reaction center is composed of at least 11 subunits. [4Fe-4S] cluster serves as cofactor.

The protein localises to the plastid. The protein resides in the chloroplast thylakoid membrane. The catalysed reaction is reduced [plastocyanin] + hnu + oxidized [2Fe-2S]-[ferredoxin] = oxidized [plastocyanin] + reduced [2Fe-2S]-[ferredoxin]. Apoprotein for the two 4Fe-4S centers FA and FB of photosystem I (PSI); essential for photochemical activity. FB is the terminal electron acceptor of PSI, donating electrons to ferredoxin. The C-terminus interacts with PsaA/B/D and helps assemble the protein into the PSI complex. Required for binding of PsaD and PsaE to PSI. PSI is a plastocyanin/cytochrome c6-ferredoxin oxidoreductase, converting photonic excitation into a charge separation, which transfers an electron from the donor P700 chlorophyll pair to the spectroscopically characterized acceptors A0, A1, FX, FA and FB in turn. The protein is Photosystem I iron-sulfur center of Pleurastrum terricola (Filamentous green alga).